The primary structure comprises 342 residues: Protein-glutamate methylesterase/protein-glutamine glutaminase 3 (342 aa).

The 118-residue stretch at 3-120 folds into the Response regulatory domain; the sequence is RVLVVEDMPT…SPGFADDARR (118 aa). Aspartate 54 is subject to 4-aspartylphosphate. Residues 152 to 342 enclose the CheB-type methylesterase domain; it reads DVPRGRVVAV…ADRLALWLRR (191 aa). Active-site residues include serine 164, histidine 191, and aspartate 285.

It belongs to the CheB family. In terms of processing, phosphorylated by CheA. Phosphorylation of the N-terminal regulatory domain activates the methylesterase activity.

It localises to the cytoplasm. The enzyme catalyses [protein]-L-glutamate 5-O-methyl ester + H2O = L-glutamyl-[protein] + methanol + H(+). It carries out the reaction L-glutaminyl-[protein] + H2O = L-glutamyl-[protein] + NH4(+). Functionally, involved in chemotaxis. Part of a chemotaxis signal transduction system that modulates chemotaxis in response to various stimuli. Catalyzes the demethylation of specific methylglutamate residues introduced into the chemoreceptors (methyl-accepting chemotaxis proteins or MCP) by CheR. Also mediates the irreversible deamidation of specific glutamine residues to glutamic acid. The polypeptide is Protein-glutamate methylesterase/protein-glutamine glutaminase 3 (Anaeromyxobacter dehalogenans (strain 2CP-C)).